The chain runs to 82 residues: Putative membrane protein insertion efficiency factor (82 aa).

Belongs to the UPF0161 family.

The protein resides in the cell inner membrane. In terms of biological role, could be involved in insertion of integral membrane proteins into the membrane. This is Putative membrane protein insertion efficiency factor from Aeromonas salmonicida (strain A449).